The sequence spans 119 residues: Polyhedrin (119 aa).

This sequence belongs to the polyhedrin family.

Its function is as follows. Major component of the virus occlusion bodies, which are large proteinaceous structures (polyhedra), that protect the virus from the outside environment for extended periods until they are ingested by insect larvae. The chain is Polyhedrin (PH) from Antheraea pernyi nuclear polyhedrosis virus (ApNPV).